A 286-amino-acid polypeptide reads, in one-letter code: Bifunctional protein FolD (286 aa).

Residues 165–167 (GRS) and S190 each bind NADP(+).

This sequence belongs to the tetrahydrofolate dehydrogenase/cyclohydrolase family. In terms of assembly, homodimer.

The catalysed reaction is (6R)-5,10-methylene-5,6,7,8-tetrahydrofolate + NADP(+) = (6R)-5,10-methenyltetrahydrofolate + NADPH. The enzyme catalyses (6R)-5,10-methenyltetrahydrofolate + H2O = (6R)-10-formyltetrahydrofolate + H(+). The protein operates within one-carbon metabolism; tetrahydrofolate interconversion. Catalyzes the oxidation of 5,10-methylenetetrahydrofolate to 5,10-methenyltetrahydrofolate and then the hydrolysis of 5,10-methenyltetrahydrofolate to 10-formyltetrahydrofolate. This chain is Bifunctional protein FolD, found in Staphylococcus aureus (strain bovine RF122 / ET3-1).